The primary structure comprises 52 residues: Rubredoxin-2 (52 aa).

In terms of domain architecture, Rubredoxin-like spans 1 to 52 (MEQWKCNICGYIYNPETGDPEGDIPAGTSFESLPDSWMCPVCGAGKEEFTKI). Positions 6, 9, 39, and 42 each coordinate Fe cation.

Belongs to the rubredoxin family. In terms of assembly, monomer. It depends on Fe(3+) as a cofactor.

Its function is as follows. Serves as an electron acceptor for pyruvate ferredoxin oxidoreductase (PFOR). This chain is Rubredoxin-2 (rub2), found in Chlorobaculum tepidum (strain ATCC 49652 / DSM 12025 / NBRC 103806 / TLS) (Chlorobium tepidum).